Consider the following 270-residue polypeptide: Hemin import ATP-binding protein HmuV (270 aa).

The 238-residue stretch at 5–242 folds into the ABC transporter domain; the sequence is LEAEAATYSV…SLINRVFDIE (238 aa). 37 to 44 serves as a coordination point for ATP; that stretch reads GPNGAGKS.

The protein belongs to the ABC transporter superfamily. Heme (hemin) importer (TC 3.A.1.14.5) family. As to quaternary structure, the complex is composed of two ATP-binding proteins (HmuV), two transmembrane proteins (HmuU) and a solute-binding protein (HmuT).

The protein resides in the cell inner membrane. Its function is as follows. Part of the ABC transporter complex HmuTUV involved in hemin import. Responsible for energy coupling to the transport system. The polypeptide is Hemin import ATP-binding protein HmuV (Rhodopseudomonas palustris (strain BisA53)).